We begin with the raw amino-acid sequence, 475 residues long: Ankyrin repeat, SAM and basic leucine zipper domain-containing protein 1 (475 aa).

Residues serine 17, serine 18, and serine 20 each carry the phosphoserine modification. 6 ANK repeats span residues 45 to 74, 78 to 107, 110 to 144, 148 to 177, 181 to 210, and 214 to 243; these read EKNE…SVDT, YGWT…NASF, DKQT…DPNM, RLMT…DVNA, NGYT…NKMI, and DGKT…PLEG. The region spanning 272-334 is the SAM domain; the sequence is SYTAFGDLEI…KILAALKELE (63 aa).

Interacts with DDX4, PIWIL1, RANBP9 and TDRD1.

It is found in the cytoplasm. In terms of biological role, plays a central role during spermatogenesis by repressing transposable elements and preventing their mobilization, which is essential for the germline integrity. Acts via the piRNA metabolic process, which mediates the repression of transposable elements during meiosis by forming complexes composed of piRNAs and Piwi proteins and governs the methylation and subsequent repression of transposons. Its association with pi-bodies suggests a participation in the primary piRNAs metabolic process. Required prior to the pachytene stage to facilitate the production of multiple types of piRNAs, including those associated with repeats involved in the regulation of retrotransposons. May act by mediating protein-protein interactions during germ cell maturation. The sequence is that of Ankyrin repeat, SAM and basic leucine zipper domain-containing protein 1 (ASZ1) from Atelerix albiventris (Middle-African hedgehog).